The chain runs to 410 residues: Argininosuccinate synthase (410 aa).

ATP-binding positions include 13 to 21 (AYSGGLDTS) and A40. The L-citrulline site is built by Y91 and S96. An ATP-binding site is contributed by G121. Residues T123, N127, and D128 each contribute to the L-aspartate site. Residue N127 coordinates L-citrulline. L-citrulline-binding residues include R131, S182, S191, E267, and Y279.

Belongs to the argininosuccinate synthase family. Type 1 subfamily. Homotetramer.

Its subcellular location is the cytoplasm. It carries out the reaction L-citrulline + L-aspartate + ATP = 2-(N(omega)-L-arginino)succinate + AMP + diphosphate + H(+). It functions in the pathway amino-acid biosynthesis; L-arginine biosynthesis; L-arginine from L-ornithine and carbamoyl phosphate: step 2/3. The polypeptide is Argininosuccinate synthase (Maricaulis maris (strain MCS10) (Caulobacter maris)).